We begin with the raw amino-acid sequence, 494 residues long: Putative myristoylated protein 006R (494 aa).

A lipid anchor (N-myristoyl glycine; by host) is attached at G2. 3 helical membrane passes run 193 to 213 (VAAL…GGIA), 214 to 234 (VAGR…LVVW), and 465 to 485 (WLLY…ILAF).

Belongs to the IIV-6 118L/458R family.

Its subcellular location is the membrane. This Aedes vexans (Inland floodwater mosquito) protein is Putative myristoylated protein 006R.